We begin with the raw amino-acid sequence, 464 residues long: Protein FAM90A5 (464 aa).

Disordered stretches follow at residues 16–42, 70–389, and 415–437; these read RAQT…DPRL, PATL…HDGA, and HSPE…SEAP. Composition is skewed to basic and acidic residues over residues 74-89 and 97-114; these read GKKE…KPRV and NKDK…DPQR. Positions 180 to 197 are enriched in low complexity; the sequence is LASLSPLRKASLSSSSSL.

The protein belongs to the FAM90 family.

This is Protein FAM90A5 from Homo sapiens (Human).